Consider the following 130-residue polypeptide: Small ribosomal subunit protein uS11c (130 aa).

This sequence belongs to the universal ribosomal protein uS11 family. In terms of assembly, part of the 30S ribosomal subunit.

It is found in the plastid. The protein localises to the chloroplast. The polypeptide is Small ribosomal subunit protein uS11c (Psilotum nudum (Whisk fern)).